A 36-amino-acid chain; its full sequence is U-limacoditoxin(7)-Dv63 (36 aa).

An N-terminal signal peptide occupies residues Met1 to Phe19.

The protein belongs to the limacoditoxin-7 family. As to expression, expressed by the venom secretory cell of the spine. The spine is a cuticular structure containing a single large nucleated venom-secreting cell at its base. It is an independent unit capable of producing, storing and injecting venom. On the back of D.vulnerans caterpillars, spines are grouped together by 50 to 100 to form scoli, of which there are eight in D.vulnerans.

It is found in the secreted. Functionally, peptide with insecticidal and antiparasitic activities. Induces irreversible paralysis in D.melanogaster when tested at high doses. It shows a moderate antiparasitic activity against the major pathogenic nematode of ruminants (H.contortus, EC(50)=41.3 uM). Does not show antimicrobial activities. Does not induce increase in intracellular calcium in mouse DRG neurons, suggesting that it does not induce pain. This Doratifera vulnerans (Mottled cup moth) protein is U-limacoditoxin(7)-Dv63.